Consider the following 504-residue polypeptide: Anaerobic nitric oxide reductase transcription regulator NorR (504 aa).

Asp57 carries the 4-aspartylphosphate modification. The Sigma-54 factor interaction domain maps to 187–416 (MIGLSPGMTQ…LEHAIHRAVV (230 aa)). ATP contacts are provided by residues 215 to 222 (GETGTGKE) and 278 to 287 (ADNGTLFLDE). A DNA-binding region (H-T-H motif) is located at residues 479 to 498 (WAACARMLETDVANLHRLAK).

Its pathway is nitrogen metabolism; nitric oxide reduction. Its function is as follows. Required for the expression of anaerobic nitric oxide (NO) reductase, acts as a transcriptional activator for at least the norVW operon. Activation also requires sigma-54. This chain is Anaerobic nitric oxide reductase transcription regulator NorR, found in Escherichia coli (strain ATCC 8739 / DSM 1576 / NBRC 3972 / NCIMB 8545 / WDCM 00012 / Crooks).